A 436-amino-acid polypeptide reads, in one-letter code: Carboxypeptidase A5 (436 aa).

Residues 1 to 33 (MQGTPGGGTRPGPSPVDRRTLLVFSFILAAALG) form the signal peptide. A propeptide spans 34–126 (QMNFTGDQVL…ERQAMAKSRR (93 aa)) (activation peptide). Residues 138–431 (SYHTLEEIYS…MALRTIMEHT (294 aa)) form the Peptidase M14 domain. 2 residues coordinate Zn(2+): H196 and E199. Residues 196 to 199 (HSRE), R254, and 271 to 272 (NR) contribute to the substrate site. Cysteines 265 and 288 form a disulfide. Position 323 (H323) interacts with Zn(2+). Substrate is bound by residues 324–325 (SY) and Y375. E397 serves as the catalytic Proton donor/acceptor.

Belongs to the peptidase M14 family. Requires Zn(2+) as cofactor. As to expression, expression is very low or not detectable.

Its subcellular location is the secreted. The protein is Carboxypeptidase A5 (CPA5) of Homo sapiens (Human).